Reading from the N-terminus, the 512-residue chain is Oxalate--CoA ligase (512 aa).

ATP is bound at residue 168 to 179; it reads HTSGTTGRPKVV. Ser283 and Ser284 each carry phosphoserine. Residues 381–429 carry the FACS motif; sequence DRFFRTGDEGKLDKDGYVFITGRIKELVNRGGEKISPAEIDAVLMQHPD. Residues 510 to 512 carry the Microbody targeting signal motif; that stretch reads AKL.

This sequence belongs to the ATP-dependent AMP-binding enzyme family.

It localises to the peroxisome matrix. The protein resides in the peroxisome membrane. The enzyme catalyses oxalate + ATP + CoA = oxalyl-CoA + AMP + diphosphate. Catalyzes the first step in a degradation pathway of oxalate to CO(2) to protect the cell against the harmful effects of oxalate derived from endogenous processes or an environmental sources. The chain is Oxalate--CoA ligase (pcs60) from Schizosaccharomyces pombe (strain 972 / ATCC 24843) (Fission yeast).